Here is a 121-residue protein sequence, read N- to C-terminus: Small ribosomal subunit protein bS16m (121 aa).

This sequence belongs to the bacterial ribosomal protein bS16 family. In terms of assembly, component of the mitochondrial small ribosomal subunit (mt-SSU). Mature yeast 74S mitochondrial ribosomes consist of a small (37S) and a large (54S) subunit. The 37S small subunit contains a 15S ribosomal RNA (15S mt-rRNA) and 34 different proteins. The 54S large subunit contains a 21S rRNA (21S mt-rRNA) and 46 different proteins.

The protein localises to the mitochondrion. Its function is as follows. Component of the mitochondrial ribosome (mitoribosome), a dedicated translation machinery responsible for the synthesis of mitochondrial genome-encoded proteins, including at least some of the essential transmembrane subunits of the mitochondrial respiratory chain. The mitoribosomes are attached to the mitochondrial inner membrane and translation products are cotranslationally integrated into the membrane. This Saccharomyces cerevisiae (strain ATCC 204508 / S288c) (Baker's yeast) protein is Small ribosomal subunit protein bS16m (MRPS16).